A 526-amino-acid polypeptide reads, in one-letter code: Lysine--tRNA ligase (526 aa).

Residues 44-52 (PSGLPHIGT) carry the 'HIGH' region motif. The short motif at 290–294 (KISKS) is the 'KMSKS' region element. Lysine 293 contacts ATP.

The protein belongs to the class-I aminoacyl-tRNA synthetase family.

The protein resides in the cytoplasm. It carries out the reaction tRNA(Lys) + L-lysine + ATP = L-lysyl-tRNA(Lys) + AMP + diphosphate. The polypeptide is Lysine--tRNA ligase (Rickettsia typhi (strain ATCC VR-144 / Wilmington)).